Here is a 179-residue protein sequence, read N- to C-terminus: Large ribosomal subunit protein uL5 (179 aa).

It belongs to the universal ribosomal protein uL5 family. Part of the 50S ribosomal subunit; part of the 5S rRNA/L5/L18/L25 subcomplex. Contacts the 5S rRNA and the P site tRNA. Forms a bridge to the 30S subunit in the 70S ribosome.

Its function is as follows. This is one of the proteins that bind and probably mediate the attachment of the 5S RNA into the large ribosomal subunit, where it forms part of the central protuberance. In the 70S ribosome it contacts protein S13 of the 30S subunit (bridge B1b), connecting the 2 subunits; this bridge is implicated in subunit movement. Contacts the P site tRNA; the 5S rRNA and some of its associated proteins might help stabilize positioning of ribosome-bound tRNAs. This chain is Large ribosomal subunit protein uL5, found in Shewanella sp. (strain ANA-3).